An 89-amino-acid chain; its full sequence is Mu-theraphotoxin-Phlo1a (89 aa).

Positions 1–22 (MKVSVLITLAVLGVMFVWTSAA) are cleaved as a signal peptide. Positions 23–52 (EQEDHGSDRRDSPALLKNLLGEEVFQSEER) are excised as a propeptide. 3 disulfide bridges follow: Cys-54–Cys-68, Cys-61–Cys-73, and Cys-67–Cys-81. The residue at position 87 (Ile-87) is an Isoleucine amide.

The protein belongs to the neurotoxin 10 (Hwtx-1) family. 39 (Jztx-34) subfamily. As to expression, expressed by the venom gland.

It localises to the secreted. Functionally, gating-modifier toxin that inhibits voltage-gated sodium channel Nav by shifting the threshold for channel activation to more positive potentials. This toxin moderately inhibits human Nav1.7/SCN9A (IC(50)=459 nM) and weakly inhibits hNav1.2/SCN2A and hNav1.5/SCN5A (&lt;20% inhibition at 1 uM peptide). Inhibition of Nav1.7 is voltage-dependent, with lower inhibition at more positive test pulses. The protein is Mu-theraphotoxin-Phlo1a of Phlogius sp. (Tarantula spider).